A 506-amino-acid polypeptide reads, in one-letter code: Acetaldehyde dehydrogenase 2 (506 aa).

NAD(+) is bound at residue 240–245 (GETTTG). Catalysis depends on residues glutamate 262 and cysteine 301.

This sequence belongs to the aldehyde dehydrogenase family.

The enzyme catalyses an aldehyde + NAD(+) + H2O = a carboxylate + NADH + 2 H(+). It participates in alcohol metabolism; ethanol degradation; acetate from ethanol: step 2/2. It functions in the pathway ketone degradation; acetoin degradation. In terms of biological role, involved in the catabolism of acetoin and ethanol. The sequence is that of Acetaldehyde dehydrogenase 2 (acoD) from Cupriavidus necator (strain ATCC 17699 / DSM 428 / KCTC 22496 / NCIMB 10442 / H16 / Stanier 337) (Ralstonia eutropha).